A 307-amino-acid chain; its full sequence is Oxygen-dependent coproporphyrinogen-III oxidase (307 aa).

Ser99 contacts substrate. A divalent metal cation contacts are provided by His103 and His113. The active-site Proton donor is His113. 115–117 (NVR) contacts substrate. The a divalent metal cation site is built by His152 and His182. The segment at 247–282 (YVEFNLVFDRGTLFGLQSGGRTESILLSMPPTAGWR) is important for dimerization. 265-267 (GGR) serves as a coordination point for substrate.

The protein belongs to the aerobic coproporphyrinogen-III oxidase family. Homodimer. The cofactor is a divalent metal cation.

It localises to the cytoplasm. The enzyme catalyses coproporphyrinogen III + O2 + 2 H(+) = protoporphyrinogen IX + 2 CO2 + 2 H2O. The protein operates within porphyrin-containing compound metabolism; protoporphyrin-IX biosynthesis; protoporphyrinogen-IX from coproporphyrinogen-III (O2 route): step 1/1. Its function is as follows. Involved in the heme biosynthesis. Catalyzes the aerobic oxidative decarboxylation of propionate groups of rings A and B of coproporphyrinogen-III to yield the vinyl groups in protoporphyrinogen-IX. The sequence is that of Oxygen-dependent coproporphyrinogen-III oxidase from Burkholderia mallei (strain SAVP1).